A 310-amino-acid chain; its full sequence is MTNKLEQLKQYSDVVADTGDIEAIARYKPLDATTNPSLLYKAAQMEQYAPLVQDALSSTDSIEAACDKIAVAIGCEILKIVPGRVSTEVDARLSFNTNASIEKAKHLIGLYEEAGISKERVLIKLASTWEGIRAAEVLEKEGINCNLTLLFSFSQAAACADAGAFLISPFVGRILDWYKANTDQKEYAPMEDPGVVSVTRIYNYYKQHGYNTVVMGASFRNTGELEALAGCDRLTISPQLLGELEADTGELKRVLTPENSGEAIAKLIEDEAAFRFSNNEDAMATEKLSQGIRGFVADQVNLENFLKSKA.

Lysine 124 serves as the catalytic Schiff-base intermediate with substrate.

It belongs to the transaldolase family. Type 1 subfamily. As to quaternary structure, homodimer.

Its subcellular location is the cytoplasm. The catalysed reaction is D-sedoheptulose 7-phosphate + D-glyceraldehyde 3-phosphate = D-erythrose 4-phosphate + beta-D-fructose 6-phosphate. Its pathway is carbohydrate degradation; pentose phosphate pathway; D-glyceraldehyde 3-phosphate and beta-D-fructose 6-phosphate from D-ribose 5-phosphate and D-xylulose 5-phosphate (non-oxidative stage): step 2/3. In terms of biological role, transaldolase is important for the balance of metabolites in the pentose-phosphate pathway. This is Transaldolase from Teredinibacter turnerae (strain ATCC 39867 / T7901).